Consider the following 101-residue polypeptide: Large ribosomal subunit protein uL23 (101 aa).

This sequence belongs to the universal ribosomal protein uL23 family. Part of the 50S ribosomal subunit. Contacts protein L29, and trigger factor when it is bound to the ribosome.

One of the early assembly proteins it binds 23S rRNA. One of the proteins that surrounds the polypeptide exit tunnel on the outside of the ribosome. Forms the main docking site for trigger factor binding to the ribosome. In Synechocystis sp. (strain ATCC 27184 / PCC 6803 / Kazusa), this protein is Large ribosomal subunit protein uL23.